Consider the following 680-residue polypeptide: MLRFVTKNSQDKSSDLFSICSDRGTFVAHNRVRTDFKFDNLVFNRVYGVSQKFTLVGNPTVCFNEGSSYLEGIAKKYLTLDGGLAIDNVLNELRSTCGIPGNAVASHAYNITSWRWYDNHVALLMNMLRAYHLQVLTEQGQYSAGDIPMYHDGHVKIKLPVTIDDTAGPTQFAWPSDRSTDSYPDWAQFSESFPSIDVPYLDVRPLTVTEVNFVLMMMSKWHRRTNLAIDYEAPQLADKFAYRHALTVQDADEWIEGDRTDDQFRPPSSKVMLSALRKYVNHNRLYNQFYTAAQLLAQIMMKPVPNCAEGYAWLMHDALVNIPKFGSIRGRYPFLLSGDAALIQATALEDWSAIMAKPELVFTYAMQVSVALNTGLYLRRVKKTGFGTTIDDSYEDGAFLQPETFVQAALACCTGQDAPLNGMSDVYVTYPDLLEFDAVTQVPITVIEPAGYNIVDDHLVVVGVPVACSPYMIFPVAAFDTANPYCGNFVIKAANKYLRKGAVYDKLEAWKLAWALRVAGYDTHFKVYGDTHGLTKFYADNGDTWTHIPEFVTDGDVMEVFVTAIERRARHFVELPRLNSPAFFRSVEVSTTIYDTHVQAGAHAVYHASRINLDYVKPVSTGIQVINAGELKNYWGSVRRTQQGLGVVGLTMPAVMPTGEPTAGAAHEELIEQADNVLVE.

Position 1 is an N-acetylmethionine; by host N-acetyltransferase MAK3 (Met1).

Belongs to the totivirus major capsid protein family. Acetylation is necessary for viral assembly.

The protein resides in the virion. Its function is as follows. Capsid protein self-assembles to form an icosahedral capsid with a T=2 symmetry, 40 nm in diameter, and consisting of 60 capsid proteins asymmetric dimers. The capsid encapsulates the genomic dsRNA and the polymerase and remains intact following cell entry to protect the dsRNA from degradation and to prevent unfavorable antiviral responses in the host cell during all the replication cycle of the virus. Nascent transcripts are transcribed within the structural confines of the virion and are extruded into the cytoplasm. Binds and removes 5' cap structures from cellular mRNA. Forms a covalent bond with m7GMP through His-154 of the capsid protein while releasing the mRNA body. The chain is Major capsid protein (gag) from Saccharomyces cerevisiae virus L-A (ScV-L-A).